Here is a 203-residue protein sequence, read N- to C-terminus: Recombination protein RecR (203 aa).

A C4-type zinc finger spans residues 57–72 (CQRCRTLAETPLCSIC). The region spanning 80–175 (GLLCVVESPA…RLSRLAYGVP (96 aa)) is the Toprim domain.

The protein belongs to the RecR family.

In terms of biological role, may play a role in DNA repair. It seems to be involved in an RecBC-independent recombinational process of DNA repair. It may act with RecF and RecO. This chain is Recombination protein RecR, found in Chromohalobacter salexigens (strain ATCC BAA-138 / DSM 3043 / CIP 106854 / NCIMB 13768 / 1H11).